Consider the following 505-residue polypeptide: Maturase K (505 aa).

The protein belongs to the intron maturase 2 family. MatK subfamily.

The protein resides in the plastid. Its subcellular location is the chloroplast. Usually encoded in the trnK tRNA gene intron. Probably assists in splicing its own and other chloroplast group II introns. The protein is Maturase K of Calycanthus occidentalis (Spice bush).